The following is a 455-amino-acid chain: Hydroxymethylglutaryl-CoA synthase 2 (455 aa).

The active-site Proton donor/acceptor is E86. Catalysis depends on C120, which acts as the Acyl-thioester intermediate. (3S)-3-hydroxy-3-methylglutaryl-CoA is bound by residues C120, T161, S211, H255, K264, N329, and S363. H255 acts as the Proton donor/acceptor in catalysis.

This sequence belongs to the thiolase-like superfamily. HMG-CoA synthase family.

The enzyme catalyses acetoacetyl-CoA + acetyl-CoA + H2O = (3S)-3-hydroxy-3-methylglutaryl-CoA + CoA + H(+). It functions in the pathway metabolic intermediate biosynthesis; (R)-mevalonate biosynthesis; (R)-mevalonate from acetyl-CoA: step 2/3. Its function is as follows. This enzyme condenses acetyl-CoA with acetoacetyl-CoA to form HMG-CoA, which is the substrate for HMG-CoA reductase. The polypeptide is Hydroxymethylglutaryl-CoA synthase 2 (HMGCS-2) (Blattella germanica (German cockroach)).